A 737-amino-acid polypeptide reads, in one-letter code: Prospero homeobox protein 1 (737 aa).

Residues methionine 1–glycine 28 are interaction with RORG. Positions lysine 103 to aspartate 135 are enriched in polar residues. The interval lysine 103–methionine 149 is disordered. A phosphoserine mark is found at serine 177, serine 179, and serine 199. The segment at histidine 178–glutamine 242 is disordered. Over residues leucine 213 to glutamine 223 the composition is skewed to low complexity. Residues alanine 227–glutamine 242 show a composition bias toward basic and acidic residues. A phosphoserine mark is found at serine 291 and serine 295. A compositionally biased stretch (basic and acidic residues) spans methionine 320–glycine 337. Disordered regions lie at residues methionine 320–glutamate 344 and lysine 445–threonine 476. A Glycyl lysine isopeptide (Lys-Gly) (interchain with G-Cter in SUMO2) cross-link involves residue lysine 324. Over residues leucine 464 to threonine 476 the composition is skewed to polar residues. A phosphoserine mark is found at serine 511, serine 514, and serine 557. In terms of domain architecture, Prospero-type homeo spans glutamine 577–methionine 635. Residues glutamine 577–leucine 735 form a homeo-Prospero region. The region spanning glutamate 636–leucine 735 is the Prospero domain. Residues glutamate 723–asparagine 729 are essential for nuclear localization, interaction with RORG, repression of RORG transcriptional activator activity.

This sequence belongs to the Prospero homeodomain family. Interacts with RORA and RORG (via AF-2 motif). Most actively expressed in the developing lens. Detected also in embryonic brain, lung, liver and kidney. In adult, it is more abundant in heart and liver than in brain, skeletal muscle, kidney and pancreas.

Its subcellular location is the nucleus. Its function is as follows. Transcription factor involved in developmental processes such as cell fate determination, gene transcriptional regulation and progenitor cell regulation in a number of organs. Plays a critical role in embryonic development and functions as a key regulatory protein in neurogenesis and the development of the heart, eye lens, liver, pancreas and the lymphatic system. Involved in the regulation of the circadian rhythm. Represses: transcription of the retinoid-related orphan receptor RORG, transcriptional activator activity of RORA and RORG and the expression of RORA/G-target genes including core clock components: BMAL1, NPAS2 and CRY1 and metabolic genes: AVPR1A and ELOVL3. The chain is Prospero homeobox protein 1 (PROX1) from Homo sapiens (Human).